Consider the following 635-residue polypeptide: Voltage-gated potassium channel KCNC4 (635 aa).

Residues 1–24 (MISSVCVSSYRGRKSGNKPPSKTC) form a disordered region. Residues 1 to 28 (MISSVCVSSYRGRKSGNKPPSKTCLKEE) are inactivation gate. Over 1–226 (MISSVCVSSY…EDPYSSRAAR (226 aa)) the chain is Cytoplasmic. Residues S8, S9, S15, and S21 each carry the phosphoserine modification. Zn(2+) contacts are provided by H116, C122, C143, and C144. The tract at residues 160–180 (IFESPDGGGSGAGPSDEAGDD) is disordered. Residues 227–247 (VVAFASLFFILVSITTFCLET) form a helical membrane-spanning segment. N256 and N265 each carry an N-linked (GlcNAc...) asparagine glycan. Residues 278–298 (EPILTYIEGVCVLWFTLEFLV) form a helical membrane-spanning segment. Residues 299-312 (RIVCCPDTLDFVKN) are Cytoplasmic-facing. A helical transmembrane segment spans residues 313–333 (LLNIIDFVAILPFYLEVGLSG). A helical; Voltage-sensor membrane pass occupies residues 345–364 (FLRVVRFVRILRIFKLTRHF). At 365–380 (VGLRVLGHTLRASTNE) the chain is on the cytoplasmic side. The chain crosses the membrane as a helical span at residues 381–401 (FLLLIIFLALGVLIFATMIYY). K(+) contacts are provided by T436, L437, G438, and Y439. Positions 436–441 (TLGYGD) match the Selectivity filter motif. The chain crosses the membrane as a helical span at residues 452–472 (VGALCALAGVLTIAMPVPVIV). The Cytoplasmic portion of the chain corresponds to 473 to 635 (NNFGMYYSLA…PTAGTLFLPH (163 aa)). A disordered region spans residues 490-580 (KKRKKHVPRP…RRALRRSTTR (91 aa)). The span at 527–542 (AREEGMIERKRADSKQ) shows a compositional bias: basic and acidic residues.

Belongs to the potassium channel family. C (Shaw) (TC 1.A.1.2) subfamily. Kv3.4/KCNC4 sub-subfamily. In terms of assembly, homotetramer. Heterotetramer of potassium channel proteins. Phosphorylation of serine residues in the inactivation gate inhibits rapid channel closure.

It is found in the membrane. The catalysed reaction is K(+)(in) = K(+)(out). Its function is as follows. Voltage-gated potassium channel that opens in response to the voltage difference across the membrane, forming a potassium-selective channel through which potassium ions pass in accordance with their electrochemical gradient. The channel displays rapid activation and inactivation kinetics. The protein is Voltage-gated potassium channel KCNC4 of Homo sapiens (Human).